A 257-amino-acid polypeptide reads, in one-letter code: 5'-nucleotidase SurE (257 aa).

A divalent metal cation is bound by residues Asp-9, Asp-10, Ser-42, and Asn-96.

This sequence belongs to the SurE nucleotidase family. The cofactor is a divalent metal cation.

Its subcellular location is the cytoplasm. It catalyses the reaction a ribonucleoside 5'-phosphate + H2O = a ribonucleoside + phosphate. Its function is as follows. Nucleotidase that shows phosphatase activity on nucleoside 5'-monophosphates. The chain is 5'-nucleotidase SurE from Campylobacter lari (strain RM2100 / D67 / ATCC BAA-1060).